The sequence spans 118 residues: Protein MGF 110-6L (118 aa).

A signal peptide spans 1-18 (MLVIFLGILGLLASQVSS). An N-linked (GlcNAc...) asparagine; by host glycan is attached at asparagine 96. The short motif at 115 to 118 (KDEL) is the Prevents secretion from ER element.

Belongs to the asfivirus MGF 110 family. Post-translationally, N-glycosylated.

Its subcellular location is the host endoplasmic reticulum lumen. Plays a role in virus cell tropism, and may be required for efficient virus replication in macrophages. The protein is Protein MGF 110-6L of African swine fever virus (strain Badajoz 1971 Vero-adapted) (Ba71V).